We begin with the raw amino-acid sequence, 336 residues long: MLIAQRPTLSEEVVSENRSRFIIEPLEPGFGYTLGNSLRRTLLSSIPGAAVTSIRIDGVLHEFTTVPGVKEDVTEIILNIKNLSVSSEHDEPVVAYLRKQGPGVVTAADIAPPAGVEFHNPDLHIATLNSKGKFELELTIERGRGYVSAAQNKSGDSEIGRIPVDSIYSPVLKVTFRVEATRVEQRTDFDKLIVDVETKQAIAPRDAVASAGTTLVELFGLARELNTAAEGIEIGPSPTDAALAADMALPIEDLDLTVRSYNCLKREGIHTVGELVARSEADLMDIRNFGAKSIDEVKAKLVELGLSLKDSPPGFDLAARAAAIEEDDAAFSDDEL.

Residues 1–226 (MLIAQRPTLS…ELFGLARELN (226 aa)) form an alpha N-terminal domain (alpha-NTD) region. Residues 241–336 (AALAADMALP…DDAAFSDDEL (96 aa)) form an alpha C-terminal domain (alpha-CTD) region.

Belongs to the RNA polymerase alpha chain family. Homodimer. The RNAP catalytic core consists of 2 alpha, 1 beta, 1 beta' and 1 omega subunit. When a sigma factor is associated with the core the holoenzyme is formed, which can initiate transcription.

It catalyses the reaction RNA(n) + a ribonucleoside 5'-triphosphate = RNA(n+1) + diphosphate. Its function is as follows. DNA-dependent RNA polymerase catalyzes the transcription of DNA into RNA using the four ribonucleoside triphosphates as substrates. The chain is DNA-directed RNA polymerase subunit alpha from Arthrobacter sp. (strain FB24).